The chain runs to 98 residues: Integration host factor subunit alpha (98 aa).

Residues 52–71 (FDLRDKNQRPGRNPKTGEDI) are disordered.

Belongs to the bacterial histone-like protein family. As to quaternary structure, heterodimer of an alpha and a beta chain.

In terms of biological role, this protein is one of the two subunits of integration host factor, a specific DNA-binding protein that functions in genetic recombination as well as in transcriptional and translational control. The protein is Integration host factor subunit alpha of Photorhabdus laumondii subsp. laumondii (strain DSM 15139 / CIP 105565 / TT01) (Photorhabdus luminescens subsp. laumondii).